The primary structure comprises 209 residues: Ribosomal RNA large subunit methyltransferase E (209 aa).

Residues glycine 63, tryptophan 65, aspartate 83, aspartate 99, and aspartate 124 each contribute to the S-adenosyl-L-methionine site. Catalysis depends on lysine 164, which acts as the Proton acceptor.

This sequence belongs to the class I-like SAM-binding methyltransferase superfamily. RNA methyltransferase RlmE family.

Its subcellular location is the cytoplasm. The catalysed reaction is uridine(2552) in 23S rRNA + S-adenosyl-L-methionine = 2'-O-methyluridine(2552) in 23S rRNA + S-adenosyl-L-homocysteine + H(+). Its function is as follows. Specifically methylates the uridine in position 2552 of 23S rRNA at the 2'-O position of the ribose in the fully assembled 50S ribosomal subunit. The protein is Ribosomal RNA large subunit methyltransferase E of Shewanella denitrificans (strain OS217 / ATCC BAA-1090 / DSM 15013).